The following is a 263-amino-acid chain: 3'-5' ssDNA/RNA exonuclease TatD (263 aa).

A divalent metal cation is bound by residues Glu-91, His-127, and His-152.

The protein belongs to the metallo-dependent hydrolases superfamily. TatD-type hydrolase family. TatD subfamily. Monomer. Mg(2+) is required as a cofactor.

The protein resides in the cytoplasm. In terms of biological role, 3'-5' exonuclease that prefers single-stranded DNA and RNA. May play a role in the H(2)O(2)-induced DNA damage repair. This chain is 3'-5' ssDNA/RNA exonuclease TatD, found in Cronobacter sakazakii (strain ATCC BAA-894) (Enterobacter sakazakii).